The following is a 444-amino-acid chain: Crh-like protein 3 (444 aa).

Residues 1–19 (MVGKSTLLSVLASASVAFA) form the signal peptide. A disulfide bond links Cys-27 and Cys-34. Residues 57 to 271 (SLESCVPEPV…WAGGEIDWNS (215 aa)) form the GH16 domain. Glu-157 functions as the Nucleophile in the catalytic mechanism. Glu-161 functions as the Proton donor in the catalytic mechanism. Glu-161 provides a ligand contact to chitin. N-linked (GlcNAc...) asparagine glycosylation is found at Asn-187 and Asn-228. Chitin-binding residues include Trp-248 and Thr-259. N-linked (GlcNAc...) asparagine glycosylation is found at Asn-315, Asn-323, Asn-336, and Asn-371. Residue Ser-415 is the site of GPI-anchor amidated serine attachment. A propeptide spans 416–444 (ADSLVANQERVLKGSLFAGIVAVVAMMAL) (removed in mature form).

It belongs to the glycosyl hydrolase 16 family. CRH1 subfamily. As to quaternary structure, forms homodimers as well as heterodimers with other crh protein members crh1 and crh2. Dimerization may be necessary for the transglycosylation activity.

It is found in the cell membrane. The catalysed reaction is Random endo-hydrolysis of N-acetyl-beta-D-glucosaminide (1-&gt;4)-beta-linkages in chitin and chitodextrins.. In terms of biological role, dual chitinase/transglycosylase that plays a role in cell wall architecture. Chitinase and transglycosylase activities are coupled. Required for the polysaccharide cross-linking at the septa and the cell wall. More specifically, transfers chitin to 1,6-beta-glucan in the cell wall. This is Crh-like protein 3 from Botryotinia fuckeliana (strain B05.10) (Noble rot fungus).